A 446-amino-acid chain; its full sequence is tRNA-2-methylthio-N(6)-dimethylallyladenosine synthase (446 aa).

An MTTase N-terminal domain is found at 2-122 (KKAYVKSYGC…LPDLLRQSRE (121 aa)). Positions 11, 47, 85, 157, 161, and 164 each coordinate [4Fe-4S] cluster. The region spanning 143 to 375 (RNRGVTGFLT…QDLLDRQRHA (233 aa)) is the Radical SAM core domain. The region spanning 378 to 440 (AASVGTLTEI…SNSLFGETLE (63 aa)) is the TRAM domain.

Belongs to the methylthiotransferase family. MiaB subfamily. Monomer. The cofactor is [4Fe-4S] cluster.

It localises to the cytoplasm. The catalysed reaction is N(6)-dimethylallyladenosine(37) in tRNA + (sulfur carrier)-SH + AH2 + 2 S-adenosyl-L-methionine = 2-methylsulfanyl-N(6)-dimethylallyladenosine(37) in tRNA + (sulfur carrier)-H + 5'-deoxyadenosine + L-methionine + A + S-adenosyl-L-homocysteine + 2 H(+). Functionally, catalyzes the methylthiolation of N6-(dimethylallyl)adenosine (i(6)A), leading to the formation of 2-methylthio-N6-(dimethylallyl)adenosine (ms(2)i(6)A) at position 37 in tRNAs that read codons beginning with uridine. This Methylorubrum extorquens (strain PA1) (Methylobacterium extorquens) protein is tRNA-2-methylthio-N(6)-dimethylallyladenosine synthase.